The sequence spans 236 residues: Probable metal transport system ATP-binding protein CT_416 (236 aa).

Residues 5 to 236 (MLLENVSFRY…FCCNTFGRCP (232 aa)) enclose the ABC transporter domain. 39–46 (GPNGGGKT) serves as a coordination point for ATP.

The protein belongs to the ABC transporter superfamily.

The protein resides in the cell inner membrane. Functionally, part of an ATP-driven transport system CT_415/CT_416/CT_417 for a metal. Probably responsible for energy coupling to the transport system. The chain is Probable metal transport system ATP-binding protein CT_416 from Chlamydia trachomatis serovar D (strain ATCC VR-885 / DSM 19411 / UW-3/Cx).